Consider the following 111-residue polypeptide: Large ribosomal subunit protein uL22 (111 aa).

The protein belongs to the universal ribosomal protein uL22 family. In terms of assembly, part of the 50S ribosomal subunit.

This protein binds specifically to 23S rRNA; its binding is stimulated by other ribosomal proteins, e.g. L4, L17, and L20. It is important during the early stages of 50S assembly. It makes multiple contacts with different domains of the 23S rRNA in the assembled 50S subunit and ribosome. Its function is as follows. The globular domain of the protein is located near the polypeptide exit tunnel on the outside of the subunit, while an extended beta-hairpin is found that lines the wall of the exit tunnel in the center of the 70S ribosome. The chain is Large ribosomal subunit protein uL22 from Clostridium perfringens (strain ATCC 13124 / DSM 756 / JCM 1290 / NCIMB 6125 / NCTC 8237 / Type A).